Reading from the N-terminus, the 114-residue chain is Ferritin-like protein (114 aa).

Fe cation-binding residues include Glu-29, Glu-59, and His-62. The cargo-loading peptide stretch occupies residues 86–114 (FTDKPITEIEEETSGGSENTGGDLGIRKL). The segment at 94–114 (IEEETSGGSENTGGDLGIRKL) is disordered. The span at 103–114 (ENTGGDLGIRKL) shows a compositional bias: gly residues.

It belongs to the ferritin-like superfamily. In terms of assembly, probably forms a decamer which binds to the pentameric axis of the interior of the protein shell; as the Flp cargo protein is flexible, packing into the shell is not rigid. 3, 4 or 5 cargo decamers bind inside the encapulin nanocompartment. It depends on Fe cation as a cofactor.

The protein resides in the encapsulin nanocompartment. In terms of biological role, cargo protein of a type 1 encapsulin nanocompartment. A ferritin-like protein that probably stores iron in the encapsulin nanocompartment. In Thermotoga maritima (strain ATCC 43589 / DSM 3109 / JCM 10099 / NBRC 100826 / MSB8), this protein is Ferritin-like protein.